A 362-amino-acid polypeptide reads, in one-letter code: Histidinol-phosphate aminotransferase (362 aa).

Position 210 is an N6-(pyridoxal phosphate)lysine (K210).

This sequence belongs to the class-II pyridoxal-phosphate-dependent aminotransferase family. Histidinol-phosphate aminotransferase subfamily. Homodimer. The cofactor is pyridoxal 5'-phosphate.

The catalysed reaction is L-histidinol phosphate + 2-oxoglutarate = 3-(imidazol-4-yl)-2-oxopropyl phosphate + L-glutamate. It functions in the pathway amino-acid biosynthesis; L-histidine biosynthesis; L-histidine from 5-phospho-alpha-D-ribose 1-diphosphate: step 7/9. This Rhodopirellula baltica (strain DSM 10527 / NCIMB 13988 / SH1) protein is Histidinol-phosphate aminotransferase.